The primary structure comprises 325 residues: Cytochrome c1, heme protein, mitochondrial (325 aa).

The N-terminal 84 residues, 1–84 (MAAAAASLRR…AVALHSAVSA (84 aa)), are a transit peptide targeting the mitochondrion. Residues 85–287 (SDLELHPPSY…SEPEHDHRKR (203 aa)) are Mitochondrial intermembrane-facing. Residues 108-209 (TSIRRGFQVY…IVRARHGGED (102 aa)) form the Cytochrome c domain. Heme c-binding residues include C121, C124, H125, and M244. Residues 288 to 308 (MGLKMLLMMGLLLPLTYAMKR) form a helical membrane-spanning segment. Residues 309–325 (HKWSVLKSRKLAYRPPK) lie on the Mitochondrial matrix side of the membrane.

The protein belongs to the cytochrome c family. As to quaternary structure, component of the ubiquinol-cytochrome c oxidoreductase (cytochrome b-c1 complex, complex III, CIII), a multisubunit enzyme composed of 11 subunits. The complex is composed of 3 respiratory subunits cytochrome b, cytochrome c1 and Rieske protein UQCRFS1, 2 core protein subunits UQCRC1/QCR1 and UQCRC2/QCR2, and 6 low-molecular weight protein subunits UQCRH/QCR6, UQCRB/QCR7, UQCRQ/QCR8, UQCR10/QCR9, UQCR11/QCR10 and subunit 9, the cleavage product of Rieske protein UQCRFS1. The complex exists as an obligatory dimer and forms supercomplexes (SCs) in the inner mitochondrial membrane with NADH-ubiquinone oxidoreductase (complex I, CI) and cytochrome c oxidase (complex IV, CIV), resulting in different assemblies (supercomplex SCI(1)III(2)IV(1) and megacomplex MCI(2)III(2)IV(2)). Interacts with FLVCR2; this interaction occurs in the absence of heme and is disrupted upon heme binding. The cofactor is heme c.

It is found in the mitochondrion inner membrane. It carries out the reaction a quinol + 2 Fe(III)-[cytochrome c](out) = a quinone + 2 Fe(II)-[cytochrome c](out) + 2 H(+)(out). Its function is as follows. Component of the ubiquinol-cytochrome c oxidoreductase, a multisubunit transmembrane complex that is part of the mitochondrial electron transport chain which drives oxidative phosphorylation. The respiratory chain contains 3 multisubunit complexes succinate dehydrogenase (complex II, CII), ubiquinol-cytochrome c oxidoreductase (cytochrome b-c1 complex, complex III, CIII) and cytochrome c oxidase (complex IV, CIV), that cooperate to transfer electrons derived from NADH and succinate to molecular oxygen, creating an electrochemical gradient over the inner membrane that drives transmembrane transport and the ATP synthase. The cytochrome b-c1 complex catalyzes electron transfer from ubiquinol to cytochrome c, linking this redox reaction to translocation of protons across the mitochondrial inner membrane, with protons being carried across the membrane as hydrogens on the quinol. In the process called Q cycle, 2 protons are consumed from the matrix, 4 protons are released into the intermembrane space and 2 electrons are passed to cytochrome c. Cytochrome c1 is a catalytic core subunit containing a c-type heme. It transfers electrons from the [2Fe-2S] iron-sulfur cluster of the Rieske protein to cytochrome c. The chain is Cytochrome c1, heme protein, mitochondrial (Cyc1) from Mus musculus (Mouse).